A 523-amino-acid chain; its full sequence is Acetyl-coenzyme A carboxylase carboxyl transferase subunit beta, chloroplastic (523 aa).

Residues 224–523 enclose the CoA carboxyltransferase N-terminal domain; that stretch reads FWVICENCHK…FVPSNQNSIK (300 aa). Cysteine 228, cysteine 231, cysteine 247, and cysteine 250 together coordinate Zn(2+). A C4-type zinc finger spans residues 228–250; the sequence is CENCHKFNYKRLFKSKMNICEEC.

It belongs to the AccD/PCCB family. Acetyl-CoA carboxylase is a heterohexamer composed of biotin carboxyl carrier protein, biotin carboxylase and 2 subunits each of ACCase subunit alpha and ACCase plastid-coded subunit beta (accD). The cofactor is Zn(2+).

Its subcellular location is the plastid. It localises to the chloroplast stroma. The catalysed reaction is N(6)-carboxybiotinyl-L-lysyl-[protein] + acetyl-CoA = N(6)-biotinyl-L-lysyl-[protein] + malonyl-CoA. It functions in the pathway lipid metabolism; malonyl-CoA biosynthesis; malonyl-CoA from acetyl-CoA: step 1/1. Functionally, component of the acetyl coenzyme A carboxylase (ACC) complex. Biotin carboxylase (BC) catalyzes the carboxylation of biotin on its carrier protein (BCCP) and then the CO(2) group is transferred by the transcarboxylase to acetyl-CoA to form malonyl-CoA. This chain is Acetyl-coenzyme A carboxylase carboxyl transferase subunit beta, chloroplastic, found in Cucumis sativus (Cucumber).